The following is a 106-amino-acid chain: MVGINVKQPEKECHDPNCPFHGELSVRGQVIEGTVTSDKADRTITVERSFYKYINKFERYEKRNSKIKAHKPDCLDVKVGDSVKIAECRQLSKTKHFVLVEVKEGE.

The protein belongs to the universal ribosomal protein uS17 family. In terms of assembly, part of the 30S ribosomal subunit.

Functionally, one of the primary rRNA binding proteins, it binds specifically to the 5'-end of 16S ribosomal RNA. This chain is Small ribosomal subunit protein uS17, found in Methanosphaera stadtmanae (strain ATCC 43021 / DSM 3091 / JCM 11832 / MCB-3).